The sequence spans 100 residues: Nucleoid-associated protein Rcas_2292 (100 aa).

This sequence belongs to the YbaB/EbfC family. As to quaternary structure, homodimer.

The protein resides in the cytoplasm. It is found in the nucleoid. Its function is as follows. Binds to DNA and alters its conformation. May be involved in regulation of gene expression, nucleoid organization and DNA protection. In Roseiflexus castenholzii (strain DSM 13941 / HLO8), this protein is Nucleoid-associated protein Rcas_2292.